The primary structure comprises 258 residues: Tryptophan synthase alpha chain (258 aa).

Active-site proton acceptor residues include Glu-47 and Asp-58.

The protein belongs to the TrpA family. In terms of assembly, tetramer of two alpha and two beta chains.

The catalysed reaction is (1S,2R)-1-C-(indol-3-yl)glycerol 3-phosphate + L-serine = D-glyceraldehyde 3-phosphate + L-tryptophan + H2O. Its pathway is amino-acid biosynthesis; L-tryptophan biosynthesis; L-tryptophan from chorismate: step 5/5. Functionally, the alpha subunit is responsible for the aldol cleavage of indoleglycerol phosphate to indole and glyceraldehyde 3-phosphate. The polypeptide is Tryptophan synthase alpha chain (Bacillus thuringiensis subsp. konkukian (strain 97-27)).